The following is a 202-amino-acid chain: NADH-quinone oxidoreductase subunit B (202 aa).

Cys-81, Cys-82, Cys-146, and Cys-176 together coordinate [4Fe-4S] cluster.

It belongs to the complex I 20 kDa subunit family. In terms of assembly, NDH-1 is composed of 14 different subunits. Subunits NuoB, C, D, E, F, and G constitute the peripheral sector of the complex. Requires [4Fe-4S] cluster as cofactor.

It is found in the cell inner membrane. It catalyses the reaction a quinone + NADH + 5 H(+)(in) = a quinol + NAD(+) + 4 H(+)(out). Functionally, NDH-1 shuttles electrons from NADH, via FMN and iron-sulfur (Fe-S) centers, to quinones in the respiratory chain. The immediate electron acceptor for the enzyme in this species is believed to be ubiquinone. Couples the redox reaction to proton translocation (for every two electrons transferred, four hydrogen ions are translocated across the cytoplasmic membrane), and thus conserves the redox energy in a proton gradient. The polypeptide is NADH-quinone oxidoreductase subunit B (Bradyrhizobium diazoefficiens (strain JCM 10833 / BCRC 13528 / IAM 13628 / NBRC 14792 / USDA 110)).